Here is a 501-residue protein sequence, read N- to C-terminus: GMP synthase [glutamine-hydrolyzing] (501 aa).

The region spanning 1–185 is the Glutamine amidotransferase type-1 domain; it reads MVLVVDYGSQ…LFNVCKLEKN (185 aa). The active-site Nucleophile is Cys75. Catalysis depends on residues His159 and Glu161. One can recognise a GMPS ATP-PPase domain in the interval 186–376; that stretch reads WKIGDLVEEK…LGIPDRIINR (191 aa). An ATP-binding site is contributed by 213–219; the sequence is SGGVDSS.

Homodimer.

It catalyses the reaction XMP + L-glutamine + ATP + H2O = GMP + L-glutamate + AMP + diphosphate + 2 H(+). Its pathway is purine metabolism; GMP biosynthesis; GMP from XMP (L-Gln route): step 1/1. Catalyzes the synthesis of GMP from XMP. The sequence is that of GMP synthase [glutamine-hydrolyzing] (guaA) from Thermotoga maritima (strain ATCC 43589 / DSM 3109 / JCM 10099 / NBRC 100826 / MSB8).